The primary structure comprises 583 residues: Septin-9 (583 aa).

M1 is modified (N-acetylmethionine). Positions M1 to G14 are enriched in polar residues. The disordered stretch occupies residues M1–T49. S30 is subject to Phosphoserine. 2 positions are modified to phosphothreonine: T42 and T49. An N6-acetyllysine modification is found at K62. Residues D79–S105 form a disordered region. Phosphoserine is present on residues S82, S85, and S89. T143 is modified (phosphothreonine). The segment at V166–D252 is disordered. Polar residues predominate over residues L204 to S221. At Y276 the chain carries Phosphotyrosine. The Septin-type G domain maps to Q293–E565. Residues G303–S310 form a G1 motif region. A GTP-binding site is contributed by G303–S310. 2 positions are modified to phosphoserine: S325 and S330. GTP contacts are provided by residues T337, G363, K443–E451, G499, and R514. The G3 motif stretch occupies residues D360–G363. Residues A442–D445 are G4 motif.

This sequence belongs to the TRAFAC class TrmE-Era-EngA-EngB-Septin-like GTPase superfamily. Septin GTPase family. As to quaternary structure, septins polymerize into heterooligomeric protein complexes that form filaments, and associate with cellular membranes, actin filaments, and microtubules. GTPase activity is required for filament formation. Interacts with SEPTIN2, SEPTIN6, SEPTIN7, SEPTIN11 and SEPTIN14. Interacts with RTKN and ARHGEF18. In terms of tissue distribution, expressed in all tissues examined except muscle. Isoforms are differentially expressed in testes, kidney, liver, heart, spleen and brain.

The protein resides in the cytoplasm. It localises to the cytoskeleton. Its function is as follows. Filament-forming cytoskeletal GTPase. May play a role in cytokinesis (Potential). This Mus musculus (Mouse) protein is Septin-9.